The chain runs to 549 residues: MAVPPRGRGIDPARTNPDTFPPSGARCMEPSPERPACSQQEPTLGMDAMASEHRDVLVLLPSREQLRLAVGVKATGRELFQQVCNVASIRDAQFFGLCVVRNNEYIFMDLEQKLSKYFSKDWKKERNEGNEKPRAPFVAFLRVQHYVENGRVISDHRARHLYYCHLKERVLRSQCAHREEAYFLLAACALQADLGEHRESAHAGRYFEPHSYFPQWIITKRGIDYILRHMPTLHRERQGLSPKEAMLCFIQEACRLEDVPVHFFRLHKDKKEGRPTVILGLALRGVHIYQGKKLEIQLDGLPAAQKLVYYTGCTWRSRHLLHLLRASHQLHLRVRPTLQQLRQREEAEEKQHYRESYISDELELDLASRSFPGSGVSSQHCPHCLSRHSADSHGSSYTSGIKANSWLRESREMSVDVPLEVHGLHEKEPSSSPRTSRSHPSTRGDSQATRQEPCTQVRTRGQSAEAVHQIQEMTAGVSEEQHSHGLDDMQLHQLALHPAPTSLSHTFHRALDCRLAGPCETRATLPSKRSSNCLALDLFGEAPPQEFVV.

The disordered stretch occupies residues methionine 1–glutamine 40. Residues arginine 54–arginine 369 form the FERM domain. Disordered regions lie at residues serine 377–glycine 400 and histidine 422–alanine 464. Residues serine 430–arginine 443 are compositionally biased toward low complexity. Polar residues predominate over residues glycine 444–glutamine 462.

The protein is FERM domain-containing protein 1 (FRMD1) of Homo sapiens (Human).